We begin with the raw amino-acid sequence, 101 residues long: Gamma-secretase subunit PEN-2 (101 aa).

The Cytoplasmic segment spans residues 1 to 17 (MNLERIPNEEKLSLCRR). Positions 18 to 36 (YYLGGFAFLPFLWLVNILW) form an intramembrane region, helical. Residues 37-57 (FFKEAFLKPAYTEQPQIKSYV) are Cytoplasmic-facing. A helical membrane pass occupies residues 58–78 (KKSALGLLLWVAVLTTWITVF). Residues 79 to 101 (QHFRAQWGEVGDYLSFTIPLGTA) are Lumenal-facing.

The protein belongs to the PEN-2 family. As to quaternary structure, the functional gamma-secretase complex is composed of at least four polypeptides: a presenilin homodimer (psen1 or psen2), nicastrin (ncstn), aph1 (aph1a or aph1b) and psenen.

It localises to the endoplasmic reticulum membrane. The protein resides in the golgi apparatus. Its subcellular location is the golgi stack membrane. The protein localises to the cell membrane. It is found in the membrane. Its function is as follows. Essential subunit of the gamma-secretase complex, an endoprotease complex that catalyzes the intramembrane cleavage of integral membrane proteins such as Notch receptors and APP (amyloid-beta precursor protein). The gamma-secretase complex plays a role in Notch and Wnt signaling cascades and regulation of downstream processes via its role in processing key regulatory proteins. This chain is Gamma-secretase subunit PEN-2 (psenen), found in Danio rerio (Zebrafish).